A 684-amino-acid chain; its full sequence is MSAKDFLVELGTEELPPKALNSLGEAFLSGIEKGLKAAGLSYAAARFYAAPRRLAVLVEQLAVQQPDRTVNLDGPPLQAAFDASGNPTQAALGFAKKCGVDLQQIDKSGPKLRFIQTIAGQPAAGLLPGIVEASLNELPIPKRMRWAARREEFVRPTQWLVMLFGDDVVECEILAQKAGRESRGHRFHNPDNVRISSPAAYLEDLRGAHVLADFAERRELIAKRVAELAAEQQGSAIVPPSLLDEVTALVEWPVPLVCSFEERFLEVPQEALITTMQDNQKYFCLLDANGKLLPRFITVANVESKAPENIVSGNEKVVRPRLTDAEFFFKQDKKQPLESFNERLRNVVFQAQLGTVFEKAQRVSGLAAYIAERIGGNAQNASRAGILSKCDLATEMVGEFPEMQGIAGYYYATHGGEAEDVALALNEQYMPRGAGAELPSTLTGAAVAVADKLDTLVGIFGIGMLPTGSKDPYALRRAALGVLRILIEKQLDLDLVAAVNAAVEQYGDKVKAAGLAEQVLDFVFDRLRARYEDEGVDVAVYQSVRALKPSSPLDFDQRVQAVQAFRQLPEAEALAAANKRVSNILAKSEDEVPPNVDASLLVEAAEKALGSAVANAESEVAPLAAARDYRAALARLAALREPVDTFFADVMVNVDDAAVRANRYALLAKLRGSFLGVADISLLG.

The protein belongs to the class-II aminoacyl-tRNA synthetase family. In terms of assembly, tetramer of two alpha and two beta subunits.

The protein resides in the cytoplasm. The catalysed reaction is tRNA(Gly) + glycine + ATP = glycyl-tRNA(Gly) + AMP + diphosphate. This Pseudomonas aeruginosa (strain ATCC 15692 / DSM 22644 / CIP 104116 / JCM 14847 / LMG 12228 / 1C / PRS 101 / PAO1) protein is Glycine--tRNA ligase beta subunit.